The primary structure comprises 475 residues: Phenolic acid decarboxylase (475 aa).

Positions 161, 183, and 225 each coordinate Mn(2+). Residues 161–166 (NVGIYR) and 182–183 (MH) contribute to the prenylated FMN site. The active-site Proton donor is Glu274.

It belongs to the UbiD family. YclC subfamily. The cofactor is prenylated FMN. It depends on Mn(2+) as a cofactor.

The catalysed reaction is 4-hydroxybenzoate + H(+) = phenol + CO2. It catalyses the reaction vanillate + H(+) = guaiacol + CO2. Involved in the non-oxidative decarboxylation and detoxification of phenolic derivatives under both aerobic and anaerobic conditions. Phenolic acid decarboxylase that catalyzes the reversible decarboxylation of 4-hydroxybenzoate and vanillate. The polypeptide is Phenolic acid decarboxylase (Escherichia coli O157:H7).